The following is a 363-amino-acid chain: tRNA(Met) cytidine acetate ligase (363 aa).

Residues 7 to 20, G96, N152, and R175 each bind ATP; that span reads IAEFNPFHNGHKYL.

It belongs to the TmcAL family.

It is found in the cytoplasm. It catalyses the reaction cytidine(34) in elongator tRNA(Met) + acetate + ATP = N(4)-acetylcytidine(34) in elongator tRNA(Met) + AMP + diphosphate. Catalyzes the formation of N(4)-acetylcytidine (ac(4)C) at the wobble position of elongator tRNA(Met), using acetate and ATP as substrates. First activates an acetate ion to form acetyladenylate (Ac-AMP) and then transfers the acetyl group to tRNA to form ac(4)C34. The protein is tRNA(Met) cytidine acetate ligase of Streptococcus thermophilus (strain ATCC BAA-491 / LMD-9).